The primary structure comprises 258 residues: MASDQTLFHYCLLTLYIIALPTWISLYFLQAPYGKHNRPGWGPTISPPLAWFLMESPTLWLTFFLFPSGQHFYNPKSFLLISPFLFHYFNRTVLYPLRLARNTTQTRGFPVSVAFMAFGFNLLNGYLQARWVSHYKDDYENEELFWWRFLAGLLIFVVGMWVNVRADKVLVGLKKQGDGGYKIPRGGLFELVSCPNYFGEIMEWFGWAVMTWSWVGFGFFLYTCANLMPRARATRLWYLEKFKDDYPKDRKAVIPFIY.

Transmembrane regions (helical) follow at residues phenylalanine 8–phenylalanine 28, leucine 49–glycine 69, serine 77–leucine 97, phenylalanine 109–alanine 129, leucine 144–valine 164, and isoleucine 201–leucine 221.

It belongs to the steroid 5-alpha reductase family. Accumulates in fibers (seed trichomes) during both their initiation and elongation phases. Also present in roots, hypocotyls, leaves, flowers and ovules, and barely in cotyledons.

The protein resides in the membrane. It carries out the reaction a 3-oxo-5alpha-steroid + NADP(+) = a 3-oxo-Delta(4)-steroid + NADPH + H(+). The protein operates within plant hormone biosynthesis; brassinosteroid biosynthesis. Involved in a reduction step in the biosynthesis of the plant steroid, brassinolide (BL). Promotes cotton fibers (seed trichomes) initiation and elongation. The protein is Steroid 5-alpha-reductase DET2 of Gossypium hirsutum (Upland cotton).